The primary structure comprises 281 residues: UPF0750 membrane protein YvjA (281 aa).

The next 5 membrane-spanning stretches (helical) occupy residues Tyr14–Pro34, Ala56–Gly76, Gly77–Thr97, Leu108–Gly128, and Ser149–Phe169.

Belongs to the UPF0750 family.

It localises to the cell membrane. In Bacillus subtilis (strain 168), this protein is UPF0750 membrane protein YvjA (yvjA).